The primary structure comprises 514 residues: RNA-binding region-containing protein 3 (514 aa).

The disordered stretch occupies residues 1 to 26; it reads MAGPEPPMPLSRGGPGSASLSPPRGD. Ser-21 is subject to Phosphoserine. Positions 27–102 constitute an RRM 1 domain; it reads RTLLVRHLPA…HTLVVEFAKE (76 aa). 3 disordered regions span residues 106 to 133, 213 to 282, and 337 to 363; these read VHSP…EKKE, MPLH…VRKK, and ETQP…FGKI. Position 108 is a phosphoserine (Ser-108). Residues 115–133 are compositionally biased toward basic and acidic residues; the sequence is TEKKKRLDDTVENDKEKKE. Residues 217–230 show a composition bias toward pro residues; it reads APLPPTSPQPPEEP. Ser-349 bears the Phosphoserine mark. Residues 418-501 form the RRM 2 domain; it reads CRIYVKNLAR…KPMVVQFARS (84 aa).

Component of the U11/U12 snRNPs that are part of the U12-type spliceosome. Found in a complex with m(7)G-capped U12 snRNA. Interacts with PDCD7.

The protein localises to the nucleus. Participates in pre-mRNA U12-dependent splicing, performed by the minor spliceosome which removes U12-type introns. U12-type introns comprises less than 1% of all non-coding sequences. Binds to the 3'-stem-loop of m(7)G-capped U12 snRNA. This Mus musculus (Mouse) protein is RNA-binding region-containing protein 3 (Rnpc3).